A 334-amino-acid polypeptide reads, in one-letter code: Putative transport protein MJ1177 (334 aa).

A run of 7 helical transmembrane segments spans residues 13 to 33, 61 to 81, 138 to 158, 191 to 211, 234 to 254, 259 to 279, and 293 to 313; these read VIVGLLIMLLYIIWPFIDVLA, LAISIYILPIMTITIYALLTF, IIDVGYLIVKVIMVLFLTFYF, SYKNLFISCVSLSIIITILSY, LLPILGGWMVYISIAIYFFLI, KAVFMFIYGELFLSIAPDFVI, and VLVVIAFLMAPLSLGLSGFAI.

This sequence belongs to the autoinducer-2 exporter (AI-2E) (TC 2.A.86) family.

It is found in the cell membrane. In Methanocaldococcus jannaschii (strain ATCC 43067 / DSM 2661 / JAL-1 / JCM 10045 / NBRC 100440) (Methanococcus jannaschii), this protein is Putative transport protein MJ1177.